The sequence spans 324 residues: DNA repair and recombination protein RadA (324 aa).

114-121 (GEFGSGKT) contributes to the ATP binding site.

It belongs to the eukaryotic RecA-like protein family.

Involved in DNA repair and in homologous recombination. Binds and assemble on single-stranded DNA to form a nucleoprotein filament. Hydrolyzes ATP in a ssDNA-dependent manner and promotes DNA strand exchange between homologous DNA molecules. This chain is DNA repair and recombination protein RadA, found in Sulfurisphaera tokodaii (strain DSM 16993 / JCM 10545 / NBRC 100140 / 7) (Sulfolobus tokodaii).